The chain runs to 149 residues: Transcriptional repressor NrdR (149 aa).

The segment at 3-34 is a zinc-finger region; that stretch reads CPFCAAVDTKVIDSRLVGDGSQVRRRRQCLEC. The 91-residue stretch at 49–139 folds into the ATP-cone domain; the sequence is PRVIKSDDIR…VYRSFEDIRE (91 aa).

The protein belongs to the NrdR family. Zn(2+) serves as cofactor.

In terms of biological role, negatively regulates transcription of bacterial ribonucleotide reductase nrd genes and operons by binding to NrdR-boxes. This is Transcriptional repressor NrdR from Photorhabdus laumondii subsp. laumondii (strain DSM 15139 / CIP 105565 / TT01) (Photorhabdus luminescens subsp. laumondii).